Reading from the N-terminus, the 79-residue chain is Scutellin-5 (79 aa).

The signal sequence occupies residues 1–24 (MSSGGLLLLLGLLTLWEVLTPVSS). Residues 31 to 79 (YELPADIGPCEDFTGAFHYSPREHEYIEFIYGGCEGNANNFNTLEECET) form the BPTI/Kunitz inhibitor domain. A disulfide bond links C40 and C64.

Its subcellular location is the secreted. Functionally, serine protease inhibitor. This chain is Scutellin-5, found in Oxyuranus scutellatus scutellatus (Australian taipan).